A 692-amino-acid polypeptide reads, in one-letter code: SH3 domain-containing protein 21 (692 aa).

Residues 1–60 (MVQSELQLQPRAGGRAEAASWGDRGNDKGGFGNPDMPSVSPGPQRPPKLSSLAYDSPPDY) are disordered. The SH3 domain occupies 65–126 (SHPEAYRVLF…PDNFVLPPPP (62 aa)). Disordered stretches follow at residues 132-501 (PRKV…EVLP), 536-605 (PKGG…SQET), and 672-692 (VMQG…TQTY). Residues 177–186 (PSRDSQKLTS) show a composition bias toward basic and acidic residues. Polar residues predominate over residues 210–220 (TQTPQQRSVSS). Basic and acidic residues-rich tracts occupy residues 378 to 396 (VSTR…EALQ), 490 to 501 (NEERLLRGEVLP), and 542 to 582 (SKEE…KEEV). Residues 628–678 (SLRGEVESLRRALELMGVQLERKLTDIWEELKSEKEQRQRLEVQVMQGTQK) are a coiled coil. A compositionally biased stretch (polar residues) spans 673–692 (MQGTQKSQTPRIIHAQTQTY).

In Macaca fascicularis (Crab-eating macaque), this protein is SH3 domain-containing protein 21 (SH3D21).